A 71-amino-acid chain; its full sequence is Gas vesicle protein A (71 aa).

Residues 12–22 (LAEVIDRILDK) are alpha helix 1. The tract at residues 26–34 (VDAWVRVSL) is beta-strand 1. The beta turn stretch occupies residues 35–37 (VGI). The beta-strand 2 stretch occupies residues 38–46 (ELLAIEARI). Positions 51–70 (VETYLKYAEAVGLTQSAAVP) are alpha helix 2.

It belongs to the gas vesicle GvpA family. As to quaternary structure, the gas vesicle shell is 2 nm thick and consists of a single layer of this protein. It forms helical ribs nearly perpendicular to the long axis of the vesicle.

Its subcellular location is the gas vesicle shell. Gas vesicles are hollow, gas filled proteinaceous nanostructures found in some microorganisms. During planktonic growth they allow positioning of the organism at a favorable depth for light or nutrient acquisition. GvpA forms the protein shell. This is Gas vesicle protein A from Microchaete diplosiphon (Fremyella diplosiphon).